Consider the following 297-residue polypeptide: MTEIIDGNAVAQSIRDDLVASIDRLADAGHRPSLATVLMSEDPASETYVSMKQDDCEEVGIEAIDIDIDSDADAAELYDTIEDLNADEDVNGILVQMPVPDHVEDRSVLRAIDPMKDVDGFHPENVGRLVAGDARYKPCTPHGIQKLIESAGVDTEGKDAVVVGRSDIVGKPMANLLIQKAPGGNATTTVCHSRTENLAERTRNADILVAAAGVPEMIDGKMIQEGATVIDVGINRVDADTEKGYELVGDVEYESAKEVAGAITPVPGGVGPMTRAMLLYNTVKATGLQHDIDVDLP.

Residues 164-166 (GRS), Ser-193, and Ile-234 contribute to the NADP(+) site.

It belongs to the tetrahydrofolate dehydrogenase/cyclohydrolase family. As to quaternary structure, homodimer.

It catalyses the reaction (6R)-5,10-methylene-5,6,7,8-tetrahydrofolate + NADP(+) = (6R)-5,10-methenyltetrahydrofolate + NADPH. It carries out the reaction (6R)-5,10-methenyltetrahydrofolate + H2O = (6R)-10-formyltetrahydrofolate + H(+). The protein operates within one-carbon metabolism; tetrahydrofolate interconversion. Its function is as follows. Catalyzes the oxidation of 5,10-methylenetetrahydrofolate to 5,10-methenyltetrahydrofolate and then the hydrolysis of 5,10-methenyltetrahydrofolate to 10-formyltetrahydrofolate. The chain is Bifunctional protein FolD 1 from Haloarcula marismortui (strain ATCC 43049 / DSM 3752 / JCM 8966 / VKM B-1809) (Halobacterium marismortui).